The sequence spans 325 residues: MKPILLQGHERSITQIKYNREGDLLFTVAKDPIVNVWYSVNGERLGTYMGHTGAVWCVDADWDTKHVLTGSADNSCRLWDCETGKQLALLKTNSAVRTCGFDFGGNIIMFSTDKQMGYQCFVSFFDLRDPSQIDSNEPYMKIPCNDSKITSAVWGPLGECVIAGHESGELNQYSAKSGEVLVNVKEHSRQINDIQLSRDMTMFVTASKDNTAKLFDSTTLEHQKTFRTERPVNSAALSPNYDHVVLGGGQEAMDVTTTSTRIGKFEARFFHLAFEEEFGRVKGHFGPINSVAFHPDGKSYSSGGEDGYVRIHYFDPQYFEFEFEA.

4 WD repeats span residues 8-47 (GHER…RLGT), 50-91 (GHTG…ALLK), 144-183 (CNDS…VLVN), and 186-225 (EHSR…HQKT). Thr219 is subject to Phosphothreonine. Residue Lys264 is modified to N6-acetyllysine. A Glycyl lysine isopeptide (Lys-Gly) (interchain with G-Cter in ubiquitin) cross-link involves residue Lys282. Residues 283–324 (GHFGPINSVAFHPDGKSYSSGGEDGYVRIHYFDPQYFEFEFE) form a WD 5 repeat. Tyr308 is subject to Phosphotyrosine.

This sequence belongs to the eIF-3 subunit I family. As to quaternary structure, component of the eukaryotic translation initiation factor 3 (eIF-3) complex, which is composed of 13 subunits: EIF3A, EIF3B, EIF3C, EIF3D, EIF3E, EIF3F, EIF3G, EIF3H, EIF3I, EIF3J, EIF3K, EIF3L and EIF3M. The eIF-3 complex appears to include 3 stable modules: module A is composed of EIF3A, EIF3B, EIF3G and EIF3I; module B is composed of EIF3F, EIF3H, and EIF3M; and module C is composed of EIF3C, EIF3D, EIF3E, EIF3K and EIF3L. EIF3C of module C binds EIF3B of module A and EIF3H of module B, thereby linking the three modules. EIF3J is a labile subunit that binds to the eIF-3 complex via EIF3B. The eIF-3 complex may interact with RPS6KB1 under conditions of nutrient depletion. Mitogenic stimulation may lead to binding and activation of a complex composed of MTOR and RPTOR, leading to phosphorylation and release of RPS6KB1 and binding of EIF4B to eIF-3. In terms of processing, phosphorylated by TGF-beta type II receptor.

It is found in the cytoplasm. Its function is as follows. Component of the eukaryotic translation initiation factor 3 (eIF-3) complex, which is required for several steps in the initiation of protein synthesis. The eIF-3 complex associates with the 40S ribosome and facilitates the recruitment of eIF-1, eIF-1A, eIF-2:GTP:methionyl-tRNAi and eIF-5 to form the 43S pre-initiation complex (43S PIC). The eIF-3 complex stimulates mRNA recruitment to the 43S PIC and scanning of the mRNA for AUG recognition. The eIF-3 complex is also required for disassembly and recycling of post-termination ribosomal complexes and subsequently prevents premature joining of the 40S and 60S ribosomal subunits prior to initiation. The eIF-3 complex specifically targets and initiates translation of a subset of mRNAs involved in cell proliferation, including cell cycling, differentiation and apoptosis, and uses different modes of RNA stem-loop binding to exert either translational activation or repression. In Mus musculus (Mouse), this protein is Eukaryotic translation initiation factor 3 subunit I (Eif3i).